The following is a 537-amino-acid chain: Chaperonin GroEL 1 (537 aa).

ATP is bound by residues 29 to 32 (TLGP), 86 to 90 (DGTTT), G413, and D494.

The protein belongs to the chaperonin (HSP60) family. Forms a cylinder of 14 subunits composed of two heptameric rings stacked back-to-back. Interacts with the co-chaperonin GroES.

Its subcellular location is the cytoplasm. It catalyses the reaction ATP + H2O + a folded polypeptide = ADP + phosphate + an unfolded polypeptide.. Functionally, together with its co-chaperonin GroES, plays an essential role in assisting protein folding. The GroEL-GroES system forms a nano-cage that allows encapsulation of the non-native substrate proteins and provides a physical environment optimized to promote and accelerate protein folding. This Mycobacterium leprae (strain TN) protein is Chaperonin GroEL 1.